The following is a 2078-amino-acid chain: Nascent polypeptide-associated complex subunit alpha, muscle-specific form (2078 aa).

4 disordered regions span residues 1–21 (MPGEATETVPATEQELPQPQA), 37–96 (ALGQ…LGTA), 595–614 (LGEPLPIGKPASSMTSPLGV), and 732–1944 (KSVP…KAMS). Polar residues-rich tracts occupy residues 9 to 21 (VPATEQELPQPQA) and 60 to 75 (AANQASPFPSPSTIAS). Residues 775-786 (SGASATASSKGT) show a composition bias toward low complexity. Polar residues predominate over residues 837-847 (PENSLSFQGSK). At S917 the chain carries Phosphoserine. Residues 933–1020 (SPSPKGAPTP…PPAVTPPSPK (88 aa)) show a composition bias toward pro residues. Low complexity predominate over residues 1045–1067 (GSPAATPLPKGAPTTPAATLPSP). Residues 1080–1113 (PTPPAATPPSPKGGPATPSPKGAPMPPAATPPSP) are compositionally biased toward pro residues. Low complexity predominate over residues 1114–1130 (KGGLATPPHKGAPTTPA). Composition is skewed to pro residues over residues 1131–1147 (ATPPSPKGGLATPPPKG) and 1154–1170 (ATPPSPKGGLATPPPKG). Residue S1181 is modified to Phosphoserine. 3 stretches are compositionally biased toward low complexity: residues 1183 to 1199 (KGGLATPSPKGAPTTPA), 1206 to 1222 (KGGLATPSPKGAPTTPA), and 1229 to 1245 (KGGLATPSPKGAPTTPA). Composition is skewed to pro residues over residues 1246–1270 (ATPPSPKGGPATPPPKGAPTPPAAT) and 1292–1344 (VTPP…PSPK). Low complexity predominate over residues 1345–1366 (GTPTLPATTPSSKGGPTTPSSK). Phosphoserine is present on residues S1397 and S1474. Residues 1470–1481 (VTPPSPKEPPAP) show a composition bias toward pro residues. Positions 1485-1507 (ATSSSPKKAPATPAPMGAPTLPA) are enriched in low complexity. Pro residues predominate over residues 1611 to 1625 (KEAPTPPAVTPPSPE). Positions 1626–1637 (KGPATPAPKGTP) are enriched in low complexity. Residues 1647–1656 (LKDSPTSPAS) are compositionally biased toward polar residues. Basic and acidic residues predominate over residues 1744–1756 (DSSKTAKGKDASH). Residues 1794–1811 (PSPPVSLPLAPSPVPTLP) show a composition bias toward pro residues. A PXLXP motif is present at residues 1841–1845 (LPLIP). Residues 1876-1891 (SAKQPVTKNNKGSGTE) are compositionally biased toward polar residues. A compositionally biased stretch (acidic residues) spans 1892–1905 (SDSDESVPELEEQD). Position 1906 is a phosphoserine; by ILK1 (S1906). The segment covering 1907-1920 (TQATTQQAQLAAAA) has biased composition (low complexity). Residues 1932–1943 (QSRSEKKARKAM) form a required for DNA-binding region. In terms of domain architecture, NAC-A/B spans 1933–1998 (SRSEKKARKA…AKIEDLSQQA (66 aa)). At S1995 the chain carries Phosphoserine. K2005 carries the post-translational modification N6-acetyllysine; alternate. K2005 is covalently cross-linked (Glycyl lysine isopeptide (Lys-Gly) (interchain with G-Cter in SUMO2); alternate). T2022 carries the post-translational modification Phosphothreonine; by GSK3-beta. T2024 carries the post-translational modification Phosphothreonine. Residues S2029, S2049, S2054, and S2066 each carry the phosphoserine modification. Residues 2039–2078 (VEVKDIELVMSQANVSRAKAVRALKNNSNDIVNAIMELTM) form the UBA domain.

Interacts (via PXLXP motif) with the muscle-restricted histone methyltransferase SMYD1 (via MYND-type zinc finger).

Its subcellular location is the cytoplasm. The protein resides in the nucleus. In terms of biological role, cardiac- and muscle-specific transcription factor. May act to regulate the expression of genes involved in the development of myotubes. Plays a critical role in ventricular cardiomyocyte expansion and regulates postnatal skeletal muscle growth and regeneration. Involved in the organized assembly of thick and thin filaments of myofibril sarcomeres. In Homo sapiens (Human), this protein is Nascent polypeptide-associated complex subunit alpha, muscle-specific form (NACA).